Reading from the N-terminus, the 801-residue chain is Conserved oligomeric Golgi complex subunit 4 (801 aa).

The segment at I397–K427 is disordered.

It belongs to the COG4 family. As to quaternary structure, component of the conserved oligomeric Golgi complex which is composed of eight different subunits and is required for normal Golgi morphology and localization.

The protein localises to the golgi apparatus membrane. Functionally, required for normal Golgi function. This chain is Conserved oligomeric Golgi complex subunit 4 (cogc-4), found in Caenorhabditis elegans.